A 171-amino-acid polypeptide reads, in one-letter code: UPF0398 protein STER_0279 (171 aa).

The protein belongs to the UPF0398 family.

In Streptococcus thermophilus (strain ATCC BAA-491 / LMD-9), this protein is UPF0398 protein STER_0279.